The primary structure comprises 254 residues: Mediator of RNA polymerase II transcription subunit 6 (254 aa).

The segment at 190–254 is disordered; that stretch reads PTFYQTKPGE…PPPEKRARVQ (65 aa). A compositionally biased stretch (pro residues) spans 227-245; it reads PPAPPAPPRPPPQTTPNKP.

The protein belongs to the Mediator complex subunit 6 family. Component of the Mediator complex.

It localises to the nucleus. Component of the Mediator complex, a coactivator involved in the regulated transcription of nearly all RNA polymerase II-dependent genes. Mediator functions as a bridge to convey information from gene-specific regulatory proteins to the basal RNA polymerase II transcription machinery. Mediator is recruited to promoters by direct interactions with regulatory proteins and serves as a scaffold for the assembly of a functional preinitiation complex with RNA polymerase II and the general transcription factors. The chain is Mediator of RNA polymerase II transcription subunit 6 (med6) from Danio rerio (Zebrafish).